The sequence spans 606 residues: Prostaglandin G/H synthase 1 (606 aa).

The N-terminal stretch at 1 to 30 (MSRSSPSLRLPVLLLLLLLLLLPPPPPVLP) is a signal peptide. In terms of domain architecture, EGF-like spans 38 to 76 (PVNPCCYFPCQHQGVCVRVALDRYQCDCTRTGYSGPNCT). 4 cysteine pairs are disulfide-bonded: C42/C53, C43/C165, C47/C63, and C65/C75. N-linked (GlcNAc...) asparagine glycosylation is found at N74, N110, and N150. The active-site Proton acceptor is the H213. Y391 functions as the For cyclooxygenase activity in the catalytic mechanism. A heme b-binding site is contributed by H394. N416 is a glycosylation site (N-linked (GlcNAc...) asparagine). A disulfide bridge connects residues C575 and C581.

The protein belongs to the prostaglandin G/H synthase family. Homodimer. The cofactor is heme b.

The protein resides in the microsome membrane. The protein localises to the endoplasmic reticulum membrane. The enzyme catalyses (5Z,8Z,11Z,14Z)-eicosatetraenoate + AH2 + 2 O2 = prostaglandin H2 + A + H2O. The catalysed reaction is (5Z,8Z,11Z,14Z)-eicosatetraenoate + 2 O2 = prostaglandin G2. It catalyses the reaction prostaglandin G2 + AH2 = prostaglandin H2 + A + H2O. It carries out the reaction (9Z,12Z)-octadecadienoate + AH2 + O2 = (9R)-hydroxy-(10E,12Z)-octadecadienoate + A + H2O. The enzyme catalyses (9Z,12Z)-octadecadienoate + AH2 + O2 = (9S)-hydroxy-(10E,12Z)-octadecadienoate + A + H2O. The catalysed reaction is (9Z,12Z)-octadecadienoate + AH2 + O2 = (13S)-hydroxy-(9Z,11E)-octadecadienoate + A + H2O. It catalyses the reaction (9Z,12Z)-octadecadienoate + AH2 + O2 = (13R)-hydroxy-(9Z,11E)-octadecadienoate + A + H2O. It participates in lipid metabolism; prostaglandin biosynthesis. The cyclooxygenase activity is inhibited by nonsteroidal anti-inflammatory drugs (NSAIDs) including ibuprofen, flurbiprofen, ketoprofen, naproxen, flurbiprofen, anirolac, fenclofenac and diclofenac. Dual cyclooxygenase and peroxidase that plays an important role in the biosynthesis pathway of prostanoids, a class of C20 oxylipins mainly derived from arachidonate ((5Z,8Z,11Z,14Z)-eicosatetraenoate, AA, C20:4(n-6)), with a particular role in the inflammatory response. The cyclooxygenase activity oxygenates AA to the hydroperoxy endoperoxide prostaglandin G2 (PGG2), and the peroxidase activity reduces PGG2 to the hydroxy endoperoxide prostaglandin H2 (PGH2), the precursor of all 2-series prostaglandins and thromboxanes. This complex transformation is initiated by abstraction of hydrogen at carbon 13 (with S-stereochemistry), followed by insertion of molecular O2 to form the endoperoxide bridge between carbon 9 and 11 that defines prostaglandins. The insertion of a second molecule of O2 (bis-oxygenase activity) yields a hydroperoxy group in PGG2 that is then reduced to PGH2 by two electrons. Involved in the constitutive production of prostanoids in particular in the stomach and platelets. In gastric epithelial cells, it is a key step in the generation of prostaglandins, such as prostaglandin E2 (PGE2), which plays an important role in cytoprotection. In platelets, it is involved in the generation of thromboxane A2 (TXA2), which promotes platelet activation and aggregation, vasoconstriction and proliferation of vascular smooth muscle cells. Can also use linoleate (LA, (9Z,12Z)-octadecadienoate, C18:2(n-6)) as substrate and produce hydroxyoctadecadienoates (HODEs) in a regio- and stereospecific manner, being (9R)-HODE ((9R)-hydroxy-(10E,12Z)-octadecadienoate) and (13S)-HODE ((13S)-hydroxy-(9Z,11E)-octadecadienoate) its major products. In Oryctolagus cuniculus (Rabbit), this protein is Prostaglandin G/H synthase 1 (PTGS1).